Consider the following 299-residue polypeptide: Diaminopimelate epimerase (299 aa).

Substrate contacts are provided by Asn-15, Gln-47, and Asn-67. The active-site Proton donor is Cys-76. Residues 77–78 (GN), Asn-163, Asn-197, and 215–216 (ER) contribute to the substrate site. The active-site Proton acceptor is the Cys-224. 225–226 (GS) is a binding site for substrate.

The protein belongs to the diaminopimelate epimerase family. Homodimer.

It localises to the cytoplasm. It carries out the reaction (2S,6S)-2,6-diaminopimelate = meso-2,6-diaminopimelate. It participates in amino-acid biosynthesis; L-lysine biosynthesis via DAP pathway; DL-2,6-diaminopimelate from LL-2,6-diaminopimelate: step 1/1. Functionally, catalyzes the stereoinversion of LL-2,6-diaminopimelate (L,L-DAP) to meso-diaminopimelate (meso-DAP), a precursor of L-lysine and an essential component of the bacterial peptidoglycan. This Agrobacterium fabrum (strain C58 / ATCC 33970) (Agrobacterium tumefaciens (strain C58)) protein is Diaminopimelate epimerase.